The sequence spans 44 residues: Photosystem I reaction center subunit IX (44 aa).

Residues Y7–I27 form a helical membrane-spanning segment.

It belongs to the PsaJ family.

Its subcellular location is the plastid. The protein localises to the chloroplast thylakoid membrane. Functionally, may help in the organization of the PsaE and PsaF subunits. The chain is Photosystem I reaction center subunit IX from Oryza nivara (Indian wild rice).